Consider the following 39-residue polypeptide: Photosystem II reaction center protein L (39 aa).

Residues 18-38 (SLYLGLLLVFVLGILFSSYFF) form a helical membrane-spanning segment.

This sequence belongs to the PsbL family. As to quaternary structure, PSII is composed of 1 copy each of membrane proteins PsbA, PsbB, PsbC, PsbD, PsbE, PsbF, PsbH, PsbI, PsbJ, PsbK, PsbL, PsbM, PsbT, PsbX, PsbY, Psb30/Ycf12, peripheral proteins PsbO, CyanoQ (PsbQ), PsbU, PsbV and a large number of cofactors. It forms dimeric complexes.

Its subcellular location is the cellular thylakoid membrane. Its function is as follows. One of the components of the core complex of photosystem II (PSII). PSII is a light-driven water:plastoquinone oxidoreductase that uses light energy to abstract electrons from H(2)O, generating O(2) and a proton gradient subsequently used for ATP formation. It consists of a core antenna complex that captures photons, and an electron transfer chain that converts photonic excitation into a charge separation. This subunit is found at the monomer-monomer interface and is required for correct PSII assembly and/or dimerization. This chain is Photosystem II reaction center protein L, found in Prochlorococcus marinus (strain SARG / CCMP1375 / SS120).